We begin with the raw amino-acid sequence, 688 residues long: Acyl-CoA synthetase short-chain family member B, mitochondrial (688 aa).

It belongs to the ATP-dependent AMP-binding enzyme family.

The protein localises to the mitochondrion. The enzyme catalyses acetate + ATP + CoA = acetyl-CoA + AMP + diphosphate. Its function is as follows. Activates acetate so that it can be used for lipid synthesis or for energy generation. The chain is Acyl-CoA synthetase short-chain family member B, mitochondrial (aslB) from Dictyostelium discoideum (Social amoeba).